The primary structure comprises 609 residues: MCGIVAAVTQRNIANFLIDGIKKLEYRGYDSSGLAVIDNKNNIVRIRCVGKVNELIKKTNKKKILGSIGVAHTRWATHGKVSKENTHPHISSNIIVVHNGIIENNSTLRGFLKKQGYIFSSDTDTEVIAHLLHWEQNKKKDSLIKVIQNSIKKLDGNYSMVVIDQNNPSKLIAARSGSPLIIGLGTEENFIASDQIALLHVTKRFIYLEEGDIAIVARKEINIFNKNNSIIQREEVVSNIEYKSAKKGKYRYYMEKEIHEQPKSIRNTLKNRLTNSNKVHFSELGSKENNIFYNTEHIQIVACGTSYNAAMVSRYWFEELANIPCDVEIASEFSSRKLVVRKKSLLITLSQSGETADTLSALRYSKKLGYLGNLTICNMKSSSLVRESDFYILTKAGLEIGVASTKSFTTQLTVLLLLVAKIINSKKENNNTSKRIVQTLSILPVRIEEILKKKQLIQDMANTLANKKNMLFLGRGNQYPIAMEGALKLKEISYIHAEAYPSGELKHGPLALIDKNIPVIMIAPENSLLEKNKKNIKEICSRGGIVYVFSNQEFDYEENINTIKLPYVEELIAPIFYTIPLQLFAYYVALKKGRDIDQPRHLAKSVTVE.

Catalysis depends on cysteine 2, which acts as the Nucleophile; for GATase activity. The Glutamine amidotransferase type-2 domain occupies 2–219 (CGIVAAVTQR…EGDIAIVARK (218 aa)). SIS domains follow at residues 288–428 (ENNI…SKKE) and 460–599 (MANT…IDQP). Lysine 604 functions as the For Fru-6P isomerization activity in the catalytic mechanism.

Homodimer.

The protein localises to the cytoplasm. It catalyses the reaction D-fructose 6-phosphate + L-glutamine = D-glucosamine 6-phosphate + L-glutamate. Catalyzes the first step in hexosamine metabolism, converting fructose-6P into glucosamine-6P using glutamine as a nitrogen source. This Buchnera aphidicola subsp. Acyrthosiphon pisum (strain APS) (Acyrthosiphon pisum symbiotic bacterium) protein is Glutamine--fructose-6-phosphate aminotransferase [isomerizing].